We begin with the raw amino-acid sequence, 197 residues long: Small ribosomal subunit protein uS11m (197 aa).

A compositionally biased stretch (basic and acidic residues) spans 43-52 (AAKEEVEKAE). Residues 43-66 (AAKEEVEKAETPAPAPSRSSFSIY) are disordered.

The protein belongs to the universal ribosomal protein uS11 family. As to quaternary structure, component of the mitochondrial ribosome small subunit (28S) which comprises a 12S rRNA and about 30 distinct proteins.

It is found in the mitochondrion. The polypeptide is Small ribosomal subunit protein uS11m (MRPS11) (Bos taurus (Bovine)).